A 197-amino-acid chain; its full sequence is dTTP/UTP pyrophosphatase (197 aa).

The Proton acceptor role is filled by aspartate 70.

This sequence belongs to the Maf family. YhdE subfamily. A divalent metal cation is required as a cofactor.

It is found in the cytoplasm. It carries out the reaction dTTP + H2O = dTMP + diphosphate + H(+). The enzyme catalyses UTP + H2O = UMP + diphosphate + H(+). Functionally, nucleoside triphosphate pyrophosphatase that hydrolyzes dTTP and UTP. May have a dual role in cell division arrest and in preventing the incorporation of modified nucleotides into cellular nucleic acids. The sequence is that of dTTP/UTP pyrophosphatase from Yersinia pestis bv. Antiqua (strain Antiqua).